The primary structure comprises 36 residues: Protein YmgL (36 aa).

This is Protein YmgL from Escherichia coli (strain K12).